The primary structure comprises 245 residues: NADH-quinone oxidoreductase subunit C (245 aa).

Residues 1–10 (MNAPQDRTDD) are compositionally biased toward basic and acidic residues. Disordered stretches follow at residues 1–54 (MNAP…GYGG) and 217–245 (QRKD…RSYQ). Residues 11–28 (GGVPVPVTPAGATGGAPA) are compositionally biased toward low complexity. Positions 39-54 (GMFGDQGTGDVSGYGG) are enriched in gly residues.

It belongs to the complex I 30 kDa subunit family. In terms of assembly, NDH-1 is composed of 14 different subunits. Subunits NuoB, C, D, E, F, and G constitute the peripheral sector of the complex.

Its subcellular location is the cell membrane. It carries out the reaction a quinone + NADH + 5 H(+)(in) = a quinol + NAD(+) + 4 H(+)(out). Functionally, NDH-1 shuttles electrons from NADH, via FMN and iron-sulfur (Fe-S) centers, to quinones in the respiratory chain. The immediate electron acceptor for the enzyme in this species is believed to be a menaquinone. Couples the redox reaction to proton translocation (for every two electrons transferred, four hydrogen ions are translocated across the cytoplasmic membrane), and thus conserves the redox energy in a proton gradient. This chain is NADH-quinone oxidoreductase subunit C, found in Salinispora arenicola (strain CNS-205).